The chain runs to 441 residues: MSHEEDLIDYSDEELQTTDAAATTAAPAANGDAAKKGDLTVSGGRPDKKGSYVGIHSTGFRDFLLKGELLRAITDCGFEHPSEVQQVCIPTAILNVDVLCQAKSGLGKTAVFVLTTLHQLEPVPGECSVLVMCHTRELAYQIKNEYARFSKYLPDVKTAVFYGGTPIQKDVEVLSNKESYPNIVVGTPGRLNALVRDKKLSLRNVKAFVLDECDKMLDQIDMRRDVQEIFRATPADKQVMMFSATLSQEIRPVCKKFMRNPLEVYVDDDTKLTLHGLQQYYIKLSEAEKNRKLNELLDSLEFNQVIIFVKSTLRANELDKLLRECNFPSIAVHSGVSQEERIKRYKEFKEFNKRICVATDVFGRGIDIERINLAINYDLPADADSYLHRVGRAGRFGTKGLSISFVSNEEDEKVLKDIEKRFEVALPEYPEGGVDSSTYMA.

Low complexity predominate over residues 23 to 32 (TTAAPAANGD). The disordered stretch occupies residues 23–42 (TTAAPAANGDAAKKGDLTVS). The Q motif motif lies at 58–86 (TGFRDFLLKGELLRAITDCGFEHPSEVQQ). In terms of domain architecture, Helicase ATP-binding spans 89-264 (IPTAILNVDV…KKFMRNPLEV (176 aa)). ATP is bound at residue 102–109 (AKSGLGKT). Positions 211 to 214 (DECD) match the DECD box motif. The region spanning 292–437 (KLNELLDSLE…EYPEGGVDSS (146 aa)) is the Helicase C-terminal domain.

It belongs to the DEAD box helicase family. DECD subfamily.

It is found in the nucleus. It catalyses the reaction ATP + H2O = ADP + phosphate + H(+). In terms of biological role, ATP-binding RNA helicase involved in transcription elongation and required for the export of mRNA out of the nucleus. SUB2 also plays a role in pre-mRNA splicing and spliceosome assembly. May be involved in rDNA and telomeric silencing, and maintenance of genome integrity. This chain is ATP-dependent RNA helicase sub2 (sub2), found in Aspergillus oryzae (strain ATCC 42149 / RIB 40) (Yellow koji mold).